The sequence spans 843 residues: MSRPLSDQEKRKQISVRGLAGVENVTELKKNFNRHLHFTLVKDRNVATPRDYYFALAHTVRDHLVGRWIRTQQHYYEKDPKRIYYLSLEFYMGRTLQNTMVNLALENACDEATYQLGLDMEELEEIEEDAGLGNGGLGRLAACFLDSMATLGLAAYGYGIRYEFGIFNQKICGGWQMEEADDWLRYGNPWEKARPEFTLPVHFYGRVEHTSQGAKWVDTQVVLAMPYDTPVPGYRNNVVNTMRLWSAKAPNDFNLKDFNVGGYIQAVLDRNLAENISRVLYPNDNFFEGKELRLKQEYFVVAATLQDIIRRFKSSKFGCRDPVRTNFDAFPDKVAIQLNDTHPSLAIPELMRVLVDLERLDWDKAWEVTVKTCAYTNHTVLPEALERWPVHLLETLLPRHLQIIYEINQRFLNRVAAAFPGDVDRLRRMSLVEEGAVKRINMAHLCIAGSHAVNGVARIHSEILKKTIFKDFYELEPHKFQNKTNGITPRRWLVLCNPGLAEIIAERIGEEYISDLDQLRKLLSYVDDEAFIRDVAKVKQENKLKFAAYLEREYKVHINPNSLFDVQVKRIHEYKRQLLNCLHVITLYNRIKKEPNKFVVPRTVMIGGKAAPGYHMAKMIIKLITAIGDVVNHDPVVGDRLRVIFLENYRVSLAEKVIPAADLSEQISTAGTEASGTGNMKFMLNGALTIGTMDGANVEMAEEAGEENFFIFGMRVEDVDRLDQRGYNAQEYYDRIPELRQIIEQLSSGFFSPKQPDLFKDIVNMLMHHDRFKVFADYEEYVKCQERVSALYKNPREWTRMVIRNIATSGKFSSDRTIAQYAREIWGVEPSRQRLPAPDEKIP.

The residue at position 2 (S2) is an N-acetylserine. S15 carries the phosphoserine; by PHK; in form phosphorylase A modification. Residues D43 and Y76 each coordinate AMP. Phosphotyrosine occurs at positions 204 and 227. 310–319 (RRFKSSKFGC) is an AMP binding site. Position 430 is a phosphoserine (S430). Phosphotyrosine is present on Y473. S514 carries the post-translational modification Phosphoserine. K681 carries the N6-(pyridoxal phosphate)lysine modification. A phosphoserine mark is found at S747 and S748.

It belongs to the glycogen phosphorylase family. Homodimer. Homotetramer; to form the enzymatically active phosphorylase A. Pyridoxal 5'-phosphate serves as cofactor. Post-translationally, phosphorylation of Ser-15 converts phosphorylase B (unphosphorylated) to phosphorylase A.

It carries out the reaction [(1-&gt;4)-alpha-D-glucosyl](n) + phosphate = [(1-&gt;4)-alpha-D-glucosyl](n-1) + alpha-D-glucose 1-phosphate. Allosterically regulated through the non-covalent binding of metabolites, being activated by AMP and inhibited by ATP, ADP, and glucose-6-phosphate. The activity is also controlled by post-translational modifications including phosphorylation. Allosteric enzyme that catalyzes the rate-limiting step in glycogen catabolism, the phosphorolytic cleavage of glycogen to produce glucose-1-phosphate, and plays a central role in maintaining cellular and organismal glucose homeostasis. This is Glycogen phosphorylase, muscle form from Oryctolagus cuniculus (Rabbit).